The following is a 631-amino-acid chain: uncharacterized protein (631 aa).

This is an uncharacterized protein from Escherichia coli (strain K12).